Consider the following 471-residue polypeptide: Methionine aminopeptidase 2 (471 aa).

Disordered regions lie at residues V16–F80 and C92–R139. Over residues E32–V47 the composition is skewed to acidic residues. The segment covering K52 to G65 has biased composition (basic residues). A compositionally biased stretch (basic and acidic residues) spans A119–R139. H224 contacts substrate. Residues D244, D255, and H324 each coordinate a divalent metal cation. Residue H332 participates in substrate binding. A divalent metal cation-binding residues include E357 and E452.

It belongs to the peptidase M24A family. Methionine aminopeptidase eukaryotic type 2 subfamily. Requires Co(2+) as cofactor. Zn(2+) is required as a cofactor. It depends on Mn(2+) as a cofactor. Fe(2+) serves as cofactor.

It localises to the cytoplasm. The catalysed reaction is Release of N-terminal amino acids, preferentially methionine, from peptides and arylamides.. Functionally, cotranslationally removes the N-terminal methionine from nascent proteins. The N-terminal methionine is often cleaved when the second residue in the primary sequence is small and uncharged (Met-Ala-, Cys, Gly, Pro, Ser, Thr, or Val). In Yarrowia lipolytica (strain CLIB 122 / E 150) (Yeast), this protein is Methionine aminopeptidase 2.